Consider the following 266-residue polypeptide: Exosome complex component Rrp42 (266 aa).

It belongs to the RNase PH family. Rrp42 subfamily. In terms of assembly, component of the archaeal exosome complex. Forms a hexameric ring-like arrangement composed of 3 Rrp41-Rrp42 heterodimers. The hexameric ring associates with a trimer of Rrp4 and/or Csl4 subunits.

Its subcellular location is the cytoplasm. In terms of biological role, non-catalytic component of the exosome, which is a complex involved in RNA degradation. Contributes to the structuring of the Rrp41 active site. This Methanosarcina mazei (strain ATCC BAA-159 / DSM 3647 / Goe1 / Go1 / JCM 11833 / OCM 88) (Methanosarcina frisia) protein is Exosome complex component Rrp42.